A 471-amino-acid chain; its full sequence is Glycosyl hydrolase family 109 protein 1 (471 aa).

Positions Met1–Ser15 are cleaved as a signal peptide. Cys16 carries N-palmitoyl cysteine lipidation. Residue Cys16 is the site of S-diacylglycerol cysteine attachment. NAD(+) contacts are provided by residues Met70–Arg71, Asp92, Trp141–His144, Glu161–Val162, and Asn190. Residues Tyr219, Arg235, Tyr247 to His250, and Tyr325 contribute to the substrate site. Tyr247 provides a ligand contact to NAD(+).

Belongs to the Gfo/Idh/MocA family. Glycosyl hydrolase 109 subfamily. Requires NAD(+) as cofactor.

The protein resides in the cell membrane. Functionally, glycosidase. The chain is Glycosyl hydrolase family 109 protein 1 from Phocaeicola vulgatus (strain ATCC 8482 / DSM 1447 / JCM 5826 / CCUG 4940 / NBRC 14291 / NCTC 11154) (Bacteroides vulgatus).